A 351-amino-acid polypeptide reads, in one-letter code: Dysbindin (351 aa).

A Phosphoserine modification is found at serine 11. Residues 88 to 181 (EKKKTSLVEL…ELDAEHAQKV (94 aa)) adopt a coiled-coil conformation. The dysbindin stretch occupies residues 173–331 (LDAEHAQKVL…DEEEVQVDTA (159 aa)). A Nuclear export signal motif is present at residues 243–256 (LMDISDQEALDVFL). Residues 286-351 (PNPSELRAKP…TPDGGEDSDS (66 aa)) are disordered. Residues 296 to 305 (PSSSSTCTDS) show a composition bias toward polar residues. Phosphoserine occurs at positions 316, 321, and 349.

It belongs to the dysbindin family. As to quaternary structure, interacts (via its coiled coil domain) with KXD1. Interacts with CMYA5, PI4K2 and RNF151. Component of the biogenesis of lysosome-related organelles complex 1 (BLOC-1) composed of at least BLOC1S1, BLOC1S2, BLOC1S3, BLOC1S4, BLOC1S5, BLOC1S6, DTNBP1/BLOC1S7 and SNAPIN/BLOC1S8. Interacts directly in the complex with BLOC1S5, BLOC1S6 and SNAPIN/BLOC1S8. The BLOC-1 complex associates with the AP-3 protein complex and membrane protein cargos. This BLOC-1 complex also associates with the BLOC-2 complex in endosomes. Binds to DTNA and DTNB but may not be a physiological binding partner. Interacts (isoform 1 and isoform 2 only) with the DNA-dependent protein kinase complex DNA-PK; the interaction phosphorylates DTNBP1 in vitro. Interacts directly in this complex with XRCC5 and XRCC6. Interacts with AP3M1, AP3B2 and TRIM32. Interacts with XPO1; the interaction exports DTNBP1 out of the nucleus. Ubiquitinated by TRIM32. Ubiquitination leads to DTNBP1 degradation. Post-translationally, isoforms 1 and 2 highly phosphorylated by PRKDC in vitro. Isoform 3 only weakly phosphorylated by PRKDC in vitro. Detected in brain, in neurons and in neuropil. Isoform 1 is expressed in the cerebral cortex, and hippocampal frontal (HF). Specific expression in the posterior half of the superior temporal gyrus (pSTG). Higher expression of isoform 2 and 3 in the HF than in the pSTG while isoform 1 shows no difference in expression in these areas. In the HF, detected in dentate gyrus (DG) and in pyramidal cells of hippocampus CA2 and CA3 (at protein level). Expressed in all principal neuronal populations of the HF, namely pyramidal neurons in the subiculum and CA1-3, granule cells in the dense cell layer of the DG (DGg), and polymorph cells in the hilus of the DG (DGh). Maximal levels in CA2, CA3, and DGh. Isoform 2 not expressed in the cerebral cortex.

The protein resides in the cytoplasm. Its subcellular location is the cytoplasmic vesicle membrane. The protein localises to the endosome membrane. It is found in the melanosome membrane. It localises to the postsynaptic density. The protein resides in the endoplasmic reticulum. Its subcellular location is the nucleus. The protein localises to the cytoplasmic vesicle. It is found in the secretory vesicle. It localises to the synaptic vesicle membrane. The protein resides in the postsynaptic cell membrane. Its function is as follows. Component of the BLOC-1 complex, a complex that is required for normal biogenesis of lysosome-related organelles (LRO), such as platelet dense granules and melanosomes. In concert with the AP-3 complex, the BLOC-1 complex is required to target membrane protein cargos into vesicles assembled at cell bodies for delivery into neurites and nerve terminals. The BLOC-1 complex, in association with SNARE proteins, is also proposed to be involved in neurite extension. Associates with the BLOC-2 complex to facilitate the transport of TYRP1 independent of AP-3 function. Plays a role in synaptic vesicle trafficking and in neurotransmitter release. Plays a role in the regulation of cell surface exposure of DRD2. May play a role in actin cytoskeleton reorganization and neurite outgrowth. May modulate MAPK8 phosphorylation. Appears to promote neuronal transmission and viability through regulating the expression of SNAP25 and SYN1, modulating PI3-kinase-Akt signaling and influencing glutamatergic release. Regulates the expression of SYN1 through binding to its promoter. Modulates prefrontal cortical activity via the dopamine/D2 pathway. The chain is Dysbindin (DTNBP1) from Homo sapiens (Human).